Here is a 425-residue protein sequence, read N- to C-terminus: UDP-N-acetylglucosamine 1-carboxyvinyltransferase (425 aa).

24 to 25 serves as a coordination point for phosphoenolpyruvate; the sequence is KN. R95 contacts UDP-N-acetyl-alpha-D-glucosamine. The active-site Proton donor is C119. At C119 the chain carries 2-(S-cysteinyl)pyruvic acid O-phosphothioketal. Residues 124-128, D308, and V330 contribute to the UDP-N-acetyl-alpha-D-glucosamine site; that span reads RPVDQ.

The protein belongs to the EPSP synthase family. MurA subfamily.

It is found in the cytoplasm. The enzyme catalyses phosphoenolpyruvate + UDP-N-acetyl-alpha-D-glucosamine = UDP-N-acetyl-3-O-(1-carboxyvinyl)-alpha-D-glucosamine + phosphate. Its pathway is cell wall biogenesis; peptidoglycan biosynthesis. In terms of biological role, cell wall formation. Adds enolpyruvyl to UDP-N-acetylglucosamine. In Deinococcus deserti (strain DSM 17065 / CIP 109153 / LMG 22923 / VCD115), this protein is UDP-N-acetylglucosamine 1-carboxyvinyltransferase.